Here is a 430-residue protein sequence, read N- to C-terminus: Histidine--tRNA ligase (430 aa).

The protein belongs to the class-II aminoacyl-tRNA synthetase family. As to quaternary structure, homodimer.

The protein localises to the cytoplasm. It catalyses the reaction tRNA(His) + L-histidine + ATP = L-histidyl-tRNA(His) + AMP + diphosphate + H(+). The protein is Histidine--tRNA ligase of Gloeothece citriformis (strain PCC 7424) (Cyanothece sp. (strain PCC 7424)).